A 402-amino-acid polypeptide reads, in one-letter code: Speedy protein E2B (402 aa).

The interval 1–89 (MDRTETRFRK…EEPEKELAPE (89 aa)) is disordered. A compositionally biased stretch (polar residues) spans 16–39 (GKITTSRQPHPQNEQSPQRSTSGY). Residues 76–89 (DESEEEPEKELAPE) are compositionally biased toward acidic residues.

The protein belongs to the Speedy/Ringo family.

In Homo sapiens (Human), this protein is Speedy protein E2B (SPDYE2B).